A 248-amino-acid polypeptide reads, in one-letter code: 3-deoxy-manno-octulosonate cytidylyltransferase (248 aa).

The protein belongs to the KdsB family.

The protein localises to the cytoplasm. It catalyses the reaction 3-deoxy-alpha-D-manno-oct-2-ulosonate + CTP = CMP-3-deoxy-beta-D-manno-octulosonate + diphosphate. It functions in the pathway nucleotide-sugar biosynthesis; CMP-3-deoxy-D-manno-octulosonate biosynthesis; CMP-3-deoxy-D-manno-octulosonate from 3-deoxy-D-manno-octulosonate and CTP: step 1/1. The protein operates within bacterial outer membrane biogenesis; lipopolysaccharide biosynthesis. Activates KDO (a required 8-carbon sugar) for incorporation into bacterial lipopolysaccharide in Gram-negative bacteria. The polypeptide is 3-deoxy-manno-octulosonate cytidylyltransferase (Chlorobaculum tepidum (strain ATCC 49652 / DSM 12025 / NBRC 103806 / TLS) (Chlorobium tepidum)).